Reading from the N-terminus, the 163-residue chain is ATP synthase subunit b 2 (163 aa).

A helical membrane pass occupies residues 5 to 25 (SLATLWATIALIIFLGVAIYI).

Belongs to the ATPase B chain family. In terms of assembly, F-type ATPases have 2 components, F(1) - the catalytic core - and F(0) - the membrane proton channel. F(1) has five subunits: alpha(3), beta(3), gamma(1), delta(1), epsilon(1). F(0) has three main subunits: a(1), b(2) and c(10-14). The alpha and beta chains form an alternating ring which encloses part of the gamma chain. F(1) is attached to F(0) by a central stalk formed by the gamma and epsilon chains, while a peripheral stalk is formed by the delta and b chains.

The protein localises to the cell inner membrane. Functionally, f(1)F(0) ATP synthase produces ATP from ADP in the presence of a proton or sodium gradient. F-type ATPases consist of two structural domains, F(1) containing the extramembraneous catalytic core and F(0) containing the membrane proton channel, linked together by a central stalk and a peripheral stalk. During catalysis, ATP synthesis in the catalytic domain of F(1) is coupled via a rotary mechanism of the central stalk subunits to proton translocation. In terms of biological role, component of the F(0) channel, it forms part of the peripheral stalk, linking F(1) to F(0). In Mesorhizobium japonicum (strain LMG 29417 / CECT 9101 / MAFF 303099) (Mesorhizobium loti (strain MAFF 303099)), this protein is ATP synthase subunit b 2.